Here is a 107-residue protein sequence, read N- to C-terminus: C-X-C motif chemokine 3 (107 aa).

A signal peptide spans 1-34 (MAHATLSAAPSNPRLLRVALLLLLLVAASRRAAG). 2 disulfides stabilise this stretch: C43-C69 and C45-C85.

The protein belongs to the intercrine alpha (chemokine CxC) family. Post-translationally, N-terminal processed form GRO-gamma(5-73) is produced by proteolytic cleavage after secretion from peripheral blood monocytes.

The protein localises to the secreted. In terms of biological role, ligand for CXCR2. Has chemotactic activity for neutrophils. May play a role in inflammation and exert its effects on endothelial cells in an autocrine fashion. In vitro, the processed form GRO-gamma(5-73) shows a fivefold higher chemotactic activity for neutrophilic granulocytes. This is C-X-C motif chemokine 3 (CXCL3) from Homo sapiens (Human).